The chain runs to 138 residues: Holo-[acyl-carrier-protein] synthase (138 aa).

Asp8 and Glu60 together coordinate Mg(2+).

This sequence belongs to the P-Pant transferase superfamily. AcpS family. Requires Mg(2+) as cofactor.

Its subcellular location is the cytoplasm. It carries out the reaction apo-[ACP] + CoA = holo-[ACP] + adenosine 3',5'-bisphosphate + H(+). Its function is as follows. Transfers the 4'-phosphopantetheine moiety from coenzyme A to a Ser of acyl-carrier-protein. The protein is Holo-[acyl-carrier-protein] synthase of Magnetococcus marinus (strain ATCC BAA-1437 / JCM 17883 / MC-1).